The primary structure comprises 390 residues: uncharacterized protein (390 aa).

Residues 215–325 enclose the Glutaredoxin domain; the sequence is SRFKRKTLGK…KLIKDCEMVE (111 aa).

This is an uncharacterized protein from Arabidopsis thaliana (Mouse-ear cress).